The following is a 356-amino-acid chain: MMSRQAFLCSLGSLYLSLLFVFLLMDVYARPANNSALKEKPADSRDENEILPPDHLNGVKMEMDGHLNKEFHQEVFLGKEMEEFEEDSEPRKNRKKLMVIFSKVDIDNDKKISAKEMQRWIMEKTDEHFQEAVEENKMHFRAVDPDGDGHVSWDEYKIKFLASKGLNEKEIAEKIKNNEELKIDEETQEVLDNLKDRWYQADNPPPDMLLNEEEFLSFLHPEHSRGMLKFMVKEIIRDLDQDGDKKLTLSEFISLPVGTVENQQAQDIDDDWVKDRRKEFEDVIDANHDGIVTMEELEEYMDPMNEYNALNEAKQMIAVADENQNHHLELEEILKYSEYFTGSKLMDYARNVHEEF.

An N-terminal signal peptide occupies residues 1–29; the sequence is MMSRQAFLCSLGSLYLSLLFVFLLMDVYA. N-linked (GlcNAc...) asparagine glycosylation is present at Asn33. EF-hand domains lie at 92-127, 131-166, 227-262, 272-307, and 308-343; these read KNRK…KTDE, EAVE…SKGL, MLKF…TVEN, WVKD…MNEY, and NALN…FTGS. Ca(2+) contacts are provided by Asp105, Asp107, Asp109, Lys111, Glu116, Asp144, Asp146, Asp148, His150, Glu155, Asp240, Asp242, Asp244, Lys246, Glu251, Asp285, Asn287, Asp289, Glu296, Asp321, Asn323, Asn325, His327, and Glu332.

It belongs to the CREC family.

The protein localises to the golgi apparatus lumen. May regulate calcium-dependent activities in the endoplasmic reticulum lumen or post-ER compartment. This chain is 45 kDa calcium-binding protein (SDF4), found in Gallus gallus (Chicken).